A 242-amino-acid chain; its full sequence is Triosephosphate isomerase (242 aa).

Residue 9–11 (NWK) coordinates substrate. Catalysis depends on His96, which acts as the Electrophile. Glu165 acts as the Proton acceptor in catalysis. Substrate contacts are provided by residues Gly171, Ser204, and 225–226 (GG).

This sequence belongs to the triosephosphate isomerase family. In terms of assembly, homodimer.

Its subcellular location is the cytoplasm. The catalysed reaction is D-glyceraldehyde 3-phosphate = dihydroxyacetone phosphate. It participates in carbohydrate biosynthesis; gluconeogenesis. The protein operates within carbohydrate degradation; glycolysis; D-glyceraldehyde 3-phosphate from glycerone phosphate: step 1/1. Its function is as follows. Involved in the gluconeogenesis. Catalyzes stereospecifically the conversion of dihydroxyacetone phosphate (DHAP) to D-glyceraldehyde-3-phosphate (G3P). This chain is Triosephosphate isomerase, found in Synechocystis sp. (strain ATCC 27184 / PCC 6803 / Kazusa).